Here is a 279-residue protein sequence, read N- to C-terminus: NAD kinase (279 aa).

The Proton acceptor role is filled by D57. NAD(+)-binding positions include 57-58, 133-134, R159, D161, and 172-177; these read DG, NE, and TAYNKS.

This sequence belongs to the NAD kinase family. The cofactor is a divalent metal cation.

The protein resides in the cytoplasm. It carries out the reaction NAD(+) + ATP = ADP + NADP(+) + H(+). In terms of biological role, involved in the regulation of the intracellular balance of NAD and NADP, and is a key enzyme in the biosynthesis of NADP. Catalyzes specifically the phosphorylation on 2'-hydroxyl of the adenosine moiety of NAD to yield NADP. In Streptococcus pyogenes serotype M2 (strain MGAS10270), this protein is NAD kinase.